Here is a 264-residue protein sequence, read N- to C-terminus: Small ribosomal subunit protein uS3 (264 aa).

A KH type-2 domain is found at Val39–Arg107. The tract at residues Asn211 to Glu264 is disordered. Positions Glu221–Gly239 are enriched in basic and acidic residues. Positions Arg240–Ser255 are enriched in gly residues.

It belongs to the universal ribosomal protein uS3 family. Part of the 30S ribosomal subunit. Forms a tight complex with proteins S10 and S14.

Functionally, binds the lower part of the 30S subunit head. Binds mRNA in the 70S ribosome, positioning it for translation. In Ralstonia nicotianae (strain ATCC BAA-1114 / GMI1000) (Ralstonia solanacearum), this protein is Small ribosomal subunit protein uS3.